A 397-amino-acid chain; its full sequence is Acetate kinase (397 aa).

Asn8 provides a ligand contact to Mg(2+). Lys15 lines the ATP pocket. Residue Arg89 coordinates substrate. Asp146 (proton donor/acceptor) is an active-site residue. ATP is bound by residues 206-210, 280-282, and 328-332; these read HLGNG, DMR, and GVGEN. Position 382 (Glu382) interacts with Mg(2+).

It belongs to the acetokinase family. In terms of assembly, homodimer. Mg(2+) serves as cofactor. Requires Mn(2+) as cofactor.

The protein localises to the cytoplasm. It catalyses the reaction acetate + ATP = acetyl phosphate + ADP. It functions in the pathway metabolic intermediate biosynthesis; acetyl-CoA biosynthesis; acetyl-CoA from acetate: step 1/2. Its function is as follows. Catalyzes the formation of acetyl phosphate from acetate and ATP. Can also catalyze the reverse reaction. The protein is Acetate kinase of Leifsonia xyli subsp. xyli (strain CTCB07).